We begin with the raw amino-acid sequence, 303 residues long: Serine/arginine-rich splicing factor SC35 (303 aa).

At Ser-7 the chain carries Phosphoserine. An RRM domain is found at 16 to 94 (YSLLVLNITF…REITVQFAKY (79 aa)). The interval 100 to 303 (KISKGRVVEP…SRSQSPYAAE (204 aa)) is disordered. Residues 112 to 148 (KSRRSRSRSPRRSRSPRRSRSPPRRRSPRRSRSPRRR) are compositionally biased toward basic residues. 2 stretches are compositionally biased toward basic and acidic residues: residues 149–158 (SRDDYREKDY) and 165–178 (RSYD…EKDR). Residues Ser-186 and Ser-188 each carry the phosphoserine modification. Positions 190-207 (SPDEKRRVRGRYDNESRS) are enriched in basic and acidic residues. Composition is skewed to low complexity over residues 210-226 (RSLS…SSSP) and 244-257 (RSPS…PRSP). Ser-251, Ser-253, Ser-256, Ser-263, Ser-278, Ser-280, Ser-283, Ser-296, and Ser-298 each carry phosphoserine. The span at 294 to 303 (SRSQSPYAAE) shows a compositional bias: polar residues.

This sequence belongs to the splicing factor SR family. SC subfamily. Component of the spliceosome. Interacts with SNRNP35, CYP59 and RS2Z33.

It is found in the nucleus speckle. Its function is as follows. Probably involved in intron recognition and spliceosome assembly, but not involved in alternative splicing regulation of the SCL33 intron. In Arabidopsis thaliana (Mouse-ear cress), this protein is Serine/arginine-rich splicing factor SC35 (SC35).